We begin with the raw amino-acid sequence, 200 residues long: NADH-quinone oxidoreductase subunit C (200 aa).

This sequence belongs to the complex I 30 kDa subunit family. In terms of assembly, NDH-1 is composed of 14 different subunits. Subunits NuoB, C, D, E, F, and G constitute the peripheral sector of the complex.

The protein localises to the cell inner membrane. It catalyses the reaction a quinone + NADH + 5 H(+)(in) = a quinol + NAD(+) + 4 H(+)(out). Its function is as follows. NDH-1 shuttles electrons from NADH, via FMN and iron-sulfur (Fe-S) centers, to quinones in the respiratory chain. The immediate electron acceptor for the enzyme in this species is believed to be ubiquinone. Couples the redox reaction to proton translocation (for every two electrons transferred, four hydrogen ions are translocated across the cytoplasmic membrane), and thus conserves the redox energy in a proton gradient. The protein is NADH-quinone oxidoreductase subunit C of Cereibacter sphaeroides (strain ATCC 17029 / ATH 2.4.9) (Rhodobacter sphaeroides).